The sequence spans 96 residues: uncharacterized protein (96 aa).

Residues 1-23 (MKQFYSVVLTIIIYISSQSNVVS) form the signal peptide. Disulfide bonds link Cys-60–Cys-74, Cys-67–Cys-78, and Cys-73–Cys-83.

It localises to the secreted. This is an uncharacterized protein from Schistosoma japonicum (Blood fluke).